We begin with the raw amino-acid sequence, 585 residues long: Tyramine beta-hydroxylase (585 aa).

The N-terminal stretch at Met1–Gly21 is a signal peptide. The DOMON domain occupies Ser31 to Ser142. N-linked (GlcNAc...) asparagine glycosylation is found at Asn32 and Asn71. The active site involves Tyr206. 2 disulfides stabilise this stretch: Cys208-Cys258 and Cys247-Cys270. Cu(2+) contacts are provided by His240 and His241. Cu(2+) is bound by residues His308, His386, and His388. Intrachain disulfides connect Cys365/Cys477, Cys369/Cys534, and Cys440/Cys462. His386 is an active-site residue. Residue Asn449 is glycosylated (N-linked (GlcNAc...) asparagine). Cu(2+) is bound at residue Met461. Asn483 is a glycosylation site (N-linked (GlcNAc...) asparagine).

Belongs to the copper type II ascorbate-dependent monooxygenase family. The cofactor is Cu(2+).

The protein localises to the cytoplasmic vesicle. It localises to the secretory vesicle. Its subcellular location is the synaptic vesicle. The enzyme catalyses tyramine + L-ascorbate + O2 = (R)-octopamine + L-dehydroascorbate + H2O. Catalyzes the hydroxylation of tyramine into octopamine, a neurotransmitter involved in pharyngeal pumping and egg laying. This chain is Tyramine beta-hydroxylase (tbh-1), found in Caenorhabditis briggsae.